The chain runs to 124 residues: Meiotically up-regulated gene 103 protein (124 aa).

The protein resides in the nucleus. Its subcellular location is the nucleolus. Has a role in meiosis. This chain is Meiotically up-regulated gene 103 protein (mug103), found in Schizosaccharomyces pombe (strain 972 / ATCC 24843) (Fission yeast).